Consider the following 201-residue polypeptide: Small ribosomal subunit protein uS4 (201 aa).

The 65-residue stretch at 91 to 155 (TRLDNVVYRA…STLPFQVARE (65 aa)) folds into the S4 RNA-binding domain.

Belongs to the universal ribosomal protein uS4 family. Part of the 30S ribosomal subunit. Contacts protein S5. The interaction surface between S4 and S5 is involved in control of translational fidelity.

In terms of biological role, one of the primary rRNA binding proteins, it binds directly to 16S rRNA where it nucleates assembly of the body of the 30S subunit. Functionally, with S5 and S12 plays an important role in translational accuracy. The sequence is that of Small ribosomal subunit protein uS4 from Nocardia farcinica (strain IFM 10152).